The following is a 365-amino-acid chain: 2-aminoethylphosphonate--pyruvate transaminase (365 aa).

The residue at position 194 (Lys-194) is an N6-(pyridoxal phosphate)lysine.

Belongs to the class-V pyridoxal-phosphate-dependent aminotransferase family. PhnW subfamily. As to quaternary structure, homodimer. It depends on pyridoxal 5'-phosphate as a cofactor.

The enzyme catalyses (2-aminoethyl)phosphonate + pyruvate = phosphonoacetaldehyde + L-alanine. Functionally, involved in phosphonate degradation. This chain is 2-aminoethylphosphonate--pyruvate transaminase, found in Bacillus cereus (strain 03BB102).